Here is a 370-residue protein sequence, read N- to C-terminus: Protein DUF642 L-GALACTONO-1,4-LACTONE-RESPONSIVE GENE 1 (370 aa).

A signal peptide spans 1 to 22; it reads MMYQEAALLLALLFISSNVVLS. Asn124 is a glycosylation site (N-linked (GlcNAc...) asparagine).

In terms of tissue distribution, expressed at low levels in roots, seedlings and leaves.

Its subcellular location is the secreted. The protein localises to the cell wall. This is Protein DUF642 L-GALACTONO-1,4-LACTONE-RESPONSIVE GENE 1 from Arabidopsis thaliana (Mouse-ear cress).